Here is a 121-residue protein sequence, read N- to C-terminus: Small ribosomal subunit protein uS13 (121 aa).

The segment at 92-121 (RRGLPVRGQNSKNNARTRKGPKRTVANKKK) is disordered. The segment covering 106 to 121 (ARTRKGPKRTVANKKK) has biased composition (basic residues).

Belongs to the universal ribosomal protein uS13 family. As to quaternary structure, part of the 30S ribosomal subunit. Forms a loose heterodimer with protein S19. Forms two bridges to the 50S subunit in the 70S ribosome.

Functionally, located at the top of the head of the 30S subunit, it contacts several helices of the 16S rRNA. In the 70S ribosome it contacts the 23S rRNA (bridge B1a) and protein L5 of the 50S subunit (bridge B1b), connecting the 2 subunits; these bridges are implicated in subunit movement. Contacts the tRNAs in the A and P-sites. This Shouchella clausii (strain KSM-K16) (Alkalihalobacillus clausii) protein is Small ribosomal subunit protein uS13.